The chain runs to 130 residues: Cystatin (130 aa).

An N-terminal signal peptide occupies residues 1 to 19 (MEWKIVVPLLAVAFTVANA). The Secondary area of contact signature appears at 67-71 (QVVSG). Disulfide bonds link Cys-85/Cys-94 and Cys-108/Cys-128.

The protein belongs to the cystatin family. In terms of tissue distribution, ubiquitous expression including brain, white muscle, heart, gill, kidney, spleen, liver and skin with the highest and lowest level in brain and gill, respectively.

It is found in the secreted. Cysteine proteinase inhibitor. This Oncorhynchus keta (Chum salmon) protein is Cystatin.